The chain runs to 591 residues: Paxillin (591 aa).

The residue at position 1 (methionine 1) is an N-acetylmethionine. Positions aspartate 3 to threonine 15 match the LD motif 1 motif. Residues histidine 17–glycine 139 are disordered. Tyrosine 31 is modified (phosphotyrosine; by PTK6). Over residues valine 45 to serine 54 the composition is skewed to pro residues. Serine 83 is modified (phosphoserine). Tyrosine 88 is subject to Phosphotyrosine. Residues serine 89 to asparagine 99 are compositionally biased toward low complexity. Phosphoserine is present on serine 106. At tyrosine 118 the chain carries Phosphotyrosine; by PTK6. Phosphoserine is present on residues serine 119, serine 126, and serine 130. Residues proline 121 to serine 137 are compositionally biased toward polar residues. Phosphothreonine is present on threonine 132. Phosphoserine is present on residues serine 137, serine 140, and serine 143. Positions glutamate 144–glutamine 156 match the LD motif 2 motif. The segment at glutamine 156–serine 261 is disordered. A Phosphotyrosine modification is found at tyrosine 181. Residues serine 216–valine 228 carry the LD motif 3 motif. Serine 230 is subject to Phosphoserine. Over residues threonine 236–serine 261 the composition is skewed to polar residues. Phosphoserine; by CDK5 is present on serine 244. Residues serine 250, serine 258, serine 261, serine 272, serine 303, serine 322, serine 332, and serine 340 each carry the phosphoserine modification. Positions alanine 262–glutamine 315 are required for binding to PARVA and ILK. The LD motif 4 signature appears at glutamate 265–phenylalanine 276. The segment at arginine 289 to leucine 338 is disordered. A compositionally biased stretch (low complexity) spans glutamine 315–leucine 334. The LD motif 5 motif lies at glutamine 333 to leucine 345. LIM zinc-binding domains lie at glycine 356–proline 415, arginine 416–alanine 473, proline 474–serine 533, and leucine 534–cysteine 591. Serine 533 carries the post-translational modification Phosphoserine.

The protein belongs to the paxillin family. As to quaternary structure, interacts in vitro with VCL/vinculin as well as to the SH3 domain of SRC and, when tyrosine phosphorylated, to the SH2 domain of CRK. Interacts with GIT1. Interacts with NUDT16L1/SDOS. Interacts with PTK2/FAK1. Interacts with PTK2B/PYK2. Interacts with ASAP2. Interacts with unphosphorylated ITGA4. Interacts with RNF5. Interacts with PDCD10. Interacts with NEK3, the interaction is prolactin-dependent. Interacts with PTK6. Interacts with TGFB1I1. Interacts with SORBS1. Interacts with PARVB. Interacts (via LD motif 4) with PARVA/PARVIN. Interacts (via LD motif 4) with ILK. Interacts (via cytoplasmic domain) with CEACAM1; the interaction is phosphotyrosyl-dependent. Interacts with LIMA1; this complex stabilizes actin dynamics. Interacts with CD36 (via C-terminus). Interacts with TRIM15. Interacts with PAK4; PAK4 acts as a scaffold to suppport PAXI phosphorylation at Ser-272. Post-translationally, phosphorylated by MAPK1/ERK2. Phosphorylated on tyrosine residues during integrin-mediated cell adhesion, embryonic development, fibroblast transformation and following stimulation of cells by mitogens. Phosphorylation at Ser-244 by CDK5 reduces its interaction with PTK2/FAK1 in matrix-cell focal adhesions (MCFA) during oligodendrocytes (OLs) differentiation. Phosphorylation at Tyr-31 and Tyr-118 by PTK6 promote the activation of RAC1 via CRK/CrKII, thereby promoting migration and invasion. Phosphorylation at Ser-250 by SLK is required for PXN redistribution and cell motility. Phosphorylation at Ser-272 promotes focal adhesion disassembly during cell migration.

The protein resides in the cytoplasm. It localises to the cytoskeleton. It is found in the cell junction. Its subcellular location is the focal adhesion. The protein localises to the cell cortex. Its function is as follows. Cytoskeletal protein involved in actin-membrane attachment at sites of cell adhesion to the extracellular matrix (focal adhesion). Recruits other proteins such as TRIM15 to focal adhesion. This chain is Paxillin, found in Mus musculus (Mouse).